Here is a 443-residue protein sequence, read N- to C-terminus: Chromosome partition protein MukF (443 aa).

Residues 209-237 are leucine-zipper; the sequence is LDETSGNLRELQDTLNAAGDKLQAQLLRI.

The protein belongs to the MukF family. As to quaternary structure, interacts, and probably forms a ternary complex, with MukE and MukB via its C-terminal region. The complex formation is stimulated by calcium or magnesium. It is required for an interaction between MukE and MukB.

Its subcellular location is the cytoplasm. The protein localises to the nucleoid. In terms of biological role, involved in chromosome condensation, segregation and cell cycle progression. May participate in facilitating chromosome segregation by condensation DNA from both sides of a centrally located replisome during cell division. Not required for mini-F plasmid partitioning. Probably acts via its interaction with MukB and MukE. Overexpression results in anucleate cells. It has a calcium binding activity. This Actinobacillus pleuropneumoniae serotype 3 (strain JL03) protein is Chromosome partition protein MukF.